The following is a 489-amino-acid chain: Cysteine--tRNA ligase (489 aa).

C29 provides a ligand contact to Zn(2+). A 'HIGH' region motif is present at residues I31–H41. C209, H234, and E238 together coordinate Zn(2+). The short motif at K266–S270 is the 'KMSKS' region element. K269 is a binding site for ATP.

It belongs to the class-I aminoacyl-tRNA synthetase family. In terms of assembly, monomer. The cofactor is Zn(2+).

It localises to the cytoplasm. It catalyses the reaction tRNA(Cys) + L-cysteine + ATP = L-cysteinyl-tRNA(Cys) + AMP + diphosphate. The sequence is that of Cysteine--tRNA ligase from Desulfotalea psychrophila (strain LSv54 / DSM 12343).